The following is a 305-amino-acid chain: ADP,ATP carrier protein (305 aa).

3 Solcar repeats span residues 8 to 101, 112 to 204, and 212 to 298; these read SNFA…IKAM, KWFA…LKPL, and NSFL…LQVI. Helical transmembrane passes span 10–37, 78–102, 110–130, 180–201, and 215–235; these read FAID…VKLL, TANV…KAMF, YAKW…LSLL, FLPS…YDSL, and LASF…SYPL. Positions 83 and 95 each coordinate ADP. Arg239 contributes to the ADP binding site. The tract at residues 239 to 244 is important for transport activity; that stretch reads RRRMMM. Residues 239–244 carry the Nucleotide carrier signature motif motif; that stretch reads RRRMMM. A helical membrane pass occupies residues 275 to 295; sequence CGANILRGVAGAGVISMYDQL.

It belongs to the mitochondrial carrier (TC 2.A.29) family. Monomer.

It is found in the mitochondrion inner membrane. It carries out the reaction ADP(in) + ATP(out) = ADP(out) + ATP(in). Its activity is regulated as follows. The matrix-open state (m-state) is inhibited by the membrane-permeable bongkrekic acid (BKA). The cytoplasmic-open state (c-state) is inhibited by the membrane-impermeable toxic inhibitor carboxyatractyloside (CATR). In terms of biological role, ADP:ATP antiporter that mediates import of ADP into the mitochondrial matrix for ATP synthesis, and export of ATP out to fuel the cell. Cycles between the cytoplasmic-open state (c-state) and the matrix-open state (m-state): operates by the alternating access mechanism with a single substrate-binding site intermittently exposed to either the cytosolic (c-state) or matrix (m-state) side of the inner mitochondrial membrane. The polypeptide is ADP,ATP carrier protein (AAC) (Kluyveromyces lactis (strain ATCC 8585 / CBS 2359 / DSM 70799 / NBRC 1267 / NRRL Y-1140 / WM37) (Yeast)).